Here is a 130-residue protein sequence, read N- to C-terminus: Small ribosomal subunit protein uS8 (130 aa).

Belongs to the universal ribosomal protein uS8 family. As to quaternary structure, part of the 30S ribosomal subunit.

One of the primary rRNA binding proteins, it binds directly to 16S rRNA central domain where it helps coordinate assembly of the platform of the 30S subunit. The chain is Small ribosomal subunit protein uS8 from Halobacterium salinarum (strain ATCC 29341 / DSM 671 / R1).